The primary structure comprises 824 residues: Lon protease (824 aa).

A disordered region spans residues 1 to 23 (MNEPMSLFDDLPEEHDEPQEAPE). Over residues 10–20 (DLPEEHDEPQE) the composition is skewed to acidic residues. The Lon N-terminal domain occupies 26–222 (LPMVVLGEMV…KVYLVLARQL (197 aa)). 375–382 (GPPGVGKT) lines the ATP pocket. The Lon proteolytic domain maps to 617 to 798 (QDEVGVATGV…DEVLRIALSR (182 aa)). Residues Ser-704 and Lys-747 contribute to the active site. The interval 800–824 (PTPANNQNGSHTNNRGQPSPAPAGT) is disordered. Polar residues predominate over residues 802-816 (PANNQNGSHTNNRGQ).

This sequence belongs to the peptidase S16 family. Homohexamer. Organized in a ring with a central cavity.

It is found in the cytoplasm. It carries out the reaction Hydrolysis of proteins in presence of ATP.. In terms of biological role, ATP-dependent serine protease that mediates the selective degradation of mutant and abnormal proteins as well as certain short-lived regulatory proteins. Required for cellular homeostasis and for survival from DNA damage and developmental changes induced by stress. Degrades polypeptides processively to yield small peptide fragments that are 5 to 10 amino acids long. Binds to DNA in a double-stranded, site-specific manner. In Chloroflexus aggregans (strain MD-66 / DSM 9485), this protein is Lon protease.